The following is a 280-amino-acid chain: Urease accessory protein UreD (280 aa).

This sequence belongs to the UreD family. UreD, UreF and UreG form a complex that acts as a GTP-hydrolysis-dependent molecular chaperone, activating the urease apoprotein by helping to assemble the nickel containing metallocenter of UreC. The UreE protein probably delivers the nickel.

The protein resides in the cytoplasm. Required for maturation of urease via the functional incorporation of the urease nickel metallocenter. This chain is Urease accessory protein UreD, found in Vibrio parahaemolyticus.